Reading from the N-terminus, the 426-residue chain is Glutamate-1-semialdehyde 2,1-aminomutase (426 aa).

Lysine 265 is subject to N6-(pyridoxal phosphate)lysine.

Belongs to the class-III pyridoxal-phosphate-dependent aminotransferase family. HemL subfamily. As to quaternary structure, homodimer. The cofactor is pyridoxal 5'-phosphate.

It localises to the cytoplasm. It carries out the reaction (S)-4-amino-5-oxopentanoate = 5-aminolevulinate. The protein operates within porphyrin-containing compound metabolism; protoporphyrin-IX biosynthesis; 5-aminolevulinate from L-glutamyl-tRNA(Glu): step 2/2. This is Glutamate-1-semialdehyde 2,1-aminomutase from Cellvibrio japonicus (strain Ueda107) (Pseudomonas fluorescens subsp. cellulosa).